Reading from the N-terminus, the 156-residue chain is Transcription elongation factor GreA (156 aa).

Positions 46 to 66 (AEYHSAREKQSFIEGRIKELE) form a coiled coil.

It belongs to the GreA/GreB family.

Its function is as follows. Necessary for efficient RNA polymerase transcription elongation past template-encoded arresting sites. The arresting sites in DNA have the property of trapping a certain fraction of elongating RNA polymerases that pass through, resulting in locked ternary complexes. Cleavage of the nascent transcript by cleavage factors such as GreA or GreB allows the resumption of elongation from the new 3'terminus. GreA releases sequences of 2 to 3 nucleotides. The sequence is that of Transcription elongation factor GreA from Ruegeria pomeroyi (strain ATCC 700808 / DSM 15171 / DSS-3) (Silicibacter pomeroyi).